We begin with the raw amino-acid sequence, 260 residues long: Hydroxyethylthiazole kinase (260 aa).

Met-49 is a binding site for substrate. Arg-124 and Thr-170 together coordinate ATP. Gly-197 lines the substrate pocket.

The protein belongs to the Thz kinase family. It depends on Mg(2+) as a cofactor.

It carries out the reaction 5-(2-hydroxyethyl)-4-methylthiazole + ATP = 4-methyl-5-(2-phosphooxyethyl)-thiazole + ADP + H(+). Its pathway is cofactor biosynthesis; thiamine diphosphate biosynthesis; 4-methyl-5-(2-phosphoethyl)-thiazole from 5-(2-hydroxyethyl)-4-methylthiazole: step 1/1. Functionally, catalyzes the phosphorylation of the hydroxyl group of 4-methyl-5-beta-hydroxyethylthiazole (THZ). This is Hydroxyethylthiazole kinase from Yersinia enterocolitica serotype O:8 / biotype 1B (strain NCTC 13174 / 8081).